The sequence spans 192 residues: VQ motif-containing protein 22 (192 aa).

Residues 24 to 38 are compositionally biased toward low complexity; sequence ASTAVTTTTAGDTTS. Positions 24–65 are disordered; sequence ASTAVTTTTAGDTTSIDSRLSPETGRVTKPTRRRSRASRRTP. Residues 52–62 show a composition bias toward basic residues; it reads KPTRRRSRASR. The VQ motif lies at 76-85; that stretch reads FRAMVQQYTG. Disordered stretches follow at residues 101–135 and 163–192; these read FSLT…PQRP and FGTV…SRLQ. Composition is skewed to low complexity over residues 102-114 and 175-192; these read SLTS…AGSS and APSS…SRLQ.

Its subcellular location is the nucleus. Its function is as follows. May function as positive regulator of plant growth. This Arabidopsis thaliana (Mouse-ear cress) protein is VQ motif-containing protein 22.